The sequence spans 203 residues: Probable flagellin 1 (203 aa).

The propeptide occupies 1–11 (MGMRFLKNEKG).

The protein belongs to the archaeal flagellin family.

It is found in the archaeal flagellum. In terms of biological role, flagellin is the subunit protein which polymerizes to form the filaments of archaeal flagella. This Archaeoglobus fulgidus (strain ATCC 49558 / DSM 4304 / JCM 9628 / NBRC 100126 / VC-16) protein is Probable flagellin 1 (flaB1).